Here is a 200-residue protein sequence, read N- to C-terminus: MSSLIPIVIEQTSRGERSYDIYSRLLKDRIIFLGTSIDDQVANAVTAQLLFLESDDPDKEINMYINSSGGITSAGLAIYDTMQHIKPKVNTYAIGMAASMAAVLLAGGTGTRYALPHARILIHQPWVKGGIGGQVTDIEITAKELLHTKEKLAEIIAKHTGQPLEKVKEDSERDRWMSAEEAKAYGLVDVVVQPRERKKA.

Residue serine 99 is the Nucleophile of the active site. Histidine 123 is a catalytic residue.

It belongs to the peptidase S14 family. Fourteen ClpP subunits assemble into 2 heptameric rings which stack back to back to give a disk-like structure with a central cavity, resembling the structure of eukaryotic proteasomes.

Its subcellular location is the cytoplasm. The enzyme catalyses Hydrolysis of proteins to small peptides in the presence of ATP and magnesium. alpha-casein is the usual test substrate. In the absence of ATP, only oligopeptides shorter than five residues are hydrolyzed (such as succinyl-Leu-Tyr-|-NHMec, and Leu-Tyr-Leu-|-Tyr-Trp, in which cleavage of the -Tyr-|-Leu- and -Tyr-|-Trp bonds also occurs).. Its function is as follows. Cleaves peptides in various proteins in a process that requires ATP hydrolysis. Has a chymotrypsin-like activity. Plays a major role in the degradation of misfolded proteins. In Symbiobacterium thermophilum (strain DSM 24528 / JCM 14929 / IAM 14863 / T), this protein is ATP-dependent Clp protease proteolytic subunit 2.